The following is a 392-amino-acid chain: tRNA (guanine-N(7)-)-methyltransferase (392 aa).

The S-adenosyl-L-methionine site is built by Glu-123, Glu-148, and Asp-175. Substrate-binding residues include Lys-201 and Asp-231.

Belongs to the class I-like SAM-binding methyltransferase superfamily. TrmB family.

The enzyme catalyses guanosine(46) in tRNA + S-adenosyl-L-methionine = N(7)-methylguanosine(46) in tRNA + S-adenosyl-L-homocysteine. Its pathway is tRNA modification; N(7)-methylguanine-tRNA biosynthesis. In terms of biological role, catalyzes the formation of N(7)-methylguanine at position 46 (m7G46) in tRNA. In Campylobacter jejuni subsp. jejuni serotype O:2 (strain ATCC 700819 / NCTC 11168), this protein is tRNA (guanine-N(7)-)-methyltransferase.